The sequence spans 469 residues: F-box only protein 3 (469 aa).

Residues 10-56 (PLTLESLPTDPLLLILSFLDYRDLINCCYVSRRLSQLSSHDPLWRRH) enclose the F-box domain. The 131-residue stretch at 278 to 408 (VATTGDITVS…FHMACPTFRV (131 aa)) folds into the ApaG domain. Acidic residues predominate over residues 419 to 449 (EYEEMEEEEEEEEEEDDDDSADMDESDDDEE). Positions 419–454 (EYEEMEEEEEEEEEEDDDDSADMDESDDDEEERQRR) are disordered.

In terms of assembly, part of a SCF (SKP1-cullin-F-box) protein ligase complex SCF(FBXO3) consisting of FBXO3, SKP1, CUL1 and RBX1. Interacts with PML, interaction is direct and takes place either alone or within the SCF complex.

The protein localises to the nucleus. The protein operates within protein modification; protein ubiquitination. Its function is as follows. Substrate recognition component of the SCF (SKP1-CUL1-F-box protein)-type E3 ubiquitin ligase complex, SCF(FBXO3), which mediates the ubiquitination and subsequent proteasomal degradation of target proteins. Mediates the ubiquitination of HIPK2 and probably that of EP300, leading to rapid degradation by the proteasome. In the presence of PML, HIPK2 ubiquitination still occurs, but degradation is prevented. PML, HIPK2 and FBXO3 may act synergically to activate p53/TP53-dependent transactivation. The SCF(FBXO3) also acts as a regulator of inflammation by mediating ubiquitination and degradation of FBXL2 in response to lipopolysaccharide (LPS). The SCF(FBXO3) complex specifically recognizes FBXL2 phosphorylated at 'Thr-404' and promotes its ubiquitination. The protein is F-box only protein 3 (FBXO3) of Bos taurus (Bovine).